The chain runs to 578 residues: Zinc finger protein with KRAB and SCAN domains 8 (578 aa).

The segment at M1–E20 is disordered. At S12 the chain carries Phosphoserine. K26 is covalently cross-linked (Glycyl lysine isopeptide (Lys-Gly) (interchain with G-Cter in SUMO2)). The SCAN box domain occupies R51–I133. The disordered stretch occupies residues A158–Q205. A compositionally biased stretch (polar residues) spans N165 to Q205. Residues K176 and K199 each participate in a glycyl lysine isopeptide (Lys-Gly) (interchain with G-Cter in SUMO2) cross-link. At S201 the chain carries Phosphoserine. A KRAB domain is found at E220–P316. Glycyl lysine isopeptide (Lys-Gly) (interchain with G-Cter in SUMO2) cross-links involve residues K221, K272, and K288. 2 C2H2-type zinc fingers span residues H322–H344 and Y350–H372. Residues K374 and K376 each participate in a glycyl lysine isopeptide (Lys-Gly) (interchain with G-Cter in SUMO2) cross-link. C2H2-type zinc fingers lie at residues Y378–H400, Y406–H428, Y434–H456, Y462–H484, Y490–H512, Y518–H540, and Y546–H568. Glycyl lysine isopeptide (Lys-Gly) (interchain with G-Cter in SUMO2) cross-links involve residues K413 and K441. K502 is covalently cross-linked (Glycyl lysine isopeptide (Lys-Gly) (interchain with G-Cter in SUMO2)). A Glycyl lysine isopeptide (Lys-Gly) (interchain with G-Cter in SUMO2) cross-link involves residue K572.

The protein belongs to the krueppel C2H2-type zinc-finger protein family.

Its subcellular location is the nucleus. Its function is as follows. May be involved in transcriptional regulation. In Pan troglodytes (Chimpanzee), this protein is Zinc finger protein with KRAB and SCAN domains 8 (ZKSCAN8).